The primary structure comprises 448 residues: Probable cysteine protease ATG4 (448 aa).

The span at 69–78 shows a compositional bias: low complexity; that stretch reads PAPIATPGTT. The segment at 69 to 90 is disordered; that stretch reads PAPIATPGTTNRQAIDTPPDSL. Cys-168 serves as the catalytic Nucleophile. Active-site residues include Asp-341 and His-343.

This sequence belongs to the peptidase C54 family.

It localises to the cytoplasm. It is found in the nucleus. The protein localises to the preautophagosomal structure. The catalysed reaction is [protein]-C-terminal L-amino acid-glycyl-phosphatidylethanolamide + H2O = [protein]-C-terminal L-amino acid-glycine + a 1,2-diacyl-sn-glycero-3-phosphoethanolamine. Functionally, cysteine protease that plays a key role in cytoplasm to vacuole transport (Cvt) and autophagy by mediating both proteolytic activation and delipidation of ATG8. Required for selective autophagic degradation of the nucleus (nucleophagy) as well as for mitophagy which contributes to regulate mitochondrial quantity and quality by eliminating the mitochondria to a basal level to fulfill cellular energy requirements and preventing excess ROS production. The protease activity is required for proteolytic activation of ATG8: cleaves the C-terminal amino acid of ATG8 to reveal a C-terminal glycine. ATG8 ubiquitin-like activity requires the exposure of the glycine at the C-terminus for its conjugation to phosphatidylethanolamine (PE) and its insertion to membranes, which is necessary for autophagy. The ATG8-PE conjugate mediates tethering between adjacent membranes and stimulates membrane hemifusion, leading to expansion of the autophagosomal membrane during autophagy. In addition to the protease activity, also catalyzes deconjugation of PE-conjugated forms of ATG8 during macroautophagy: ATG8 delipidation is required to release the protein from membranes, which facilitates multiple events during macroautophagy, and especially for efficient autophagosome biogenesis, the assembly of ATG9-containing tubulovesicular clusters into phagophores/autophagosomes, and for the disassembly of PAS-associated ATG components. ATG8 delipidation by ATG4 also recycles ATG8-PE generated on inappropriate membranes to maintain a reservoir of unlipidated ATG8 that is required for autophagosome formation at the PAS. This chain is Probable cysteine protease ATG4 (ATG4), found in Chaetomium globosum (strain ATCC 6205 / CBS 148.51 / DSM 1962 / NBRC 6347 / NRRL 1970) (Soil fungus).